A 216-amino-acid chain; its full sequence is MAEVEAPATAVEAPAAAVATTTPEVAAPEAGAATEAKGPHKLHRQWTFWYDIQTKTKSGAAWGTSLKKAYTFDTVEEFWSMYDQIFRPSKLSGNADFHLFKAGVEPKWEDPECANGGKWTVPCNRKATFETMWLETLMALIGEQFDETEDICGIVASVRARGDKLALWTRTASNEAVQVNIGKKWKDVIDYNDKITYTFHDDSKRDKPSRGGRYTV.

Positions 1 to 23 (MAEVEAPATAVEAPAAAVATTTP) are disordered. Cysteines 113 and 152 form a disulfide.

Belongs to the eukaryotic initiation factor 4E family. As to quaternary structure, EIF4F is a multi-subunit complex, the composition of which varies with external and internal environmental conditions. It is composed of at least EIF4A, EIF4E and EIF4G. EIF4E is also known to interact with other partners. In higher plants two isoforms of EIF4F have been identified, named isoform EIF4F and isoform EIF(iso)4F. Isoform EIF4F has subunits p220 and p26, whereas isoform EIF(iso)4F has subunits p82 and p28. In terms of processing, according to the redox status, the Cys-113-Cys-152 disulfide bridge may have a role in regulating protein function by affecting its ability to bind capped mRNA.

In terms of biological role, recognizes and binds the 7-methylguanosine-containing mRNA cap during an early step in the initiation of protein synthesis and facilitates ribosome binding by inducing the unwinding of the mRNAs secondary structures. This chain is Eukaryotic translation initiation factor isoform 4E-2, found in Zea mays (Maize).